A 415-amino-acid chain; its full sequence is Tyrosine--tRNA ligase (415 aa).

Positions 54 to 63 (PTGSNIHLGH) match the 'HIGH' region motif. Residues 248–252 (KMSKT) carry the 'KMSKS' region motif. Lysine 251 serves as a coordination point for ATP. Residues 351-415 (AKAFYLMSAV…GKKTFRRLTA (65 aa)) form the S4 RNA-binding domain.

This sequence belongs to the class-I aminoacyl-tRNA synthetase family. TyrS type 2 subfamily. In terms of assembly, homodimer.

It localises to the cytoplasm. The enzyme catalyses tRNA(Tyr) + L-tyrosine + ATP = L-tyrosyl-tRNA(Tyr) + AMP + diphosphate + H(+). Catalyzes the attachment of tyrosine to tRNA(Tyr) in a two-step reaction: tyrosine is first activated by ATP to form Tyr-AMP and then transferred to the acceptor end of tRNA(Tyr). The chain is Tyrosine--tRNA ligase from Synechococcus sp. (strain CC9902).